The chain runs to 125 residues: Ly6/PLAUR domain-containing protein 2 (125 aa).

The first 22 residues, 1–22, serve as a signal peptide directing secretion; sequence MRGTRLALLALVLAACGELAPA. The region spanning 25 to 100 is the UPAR/Ly6 domain; the sequence is CYVCPEPTGV…VSCCNTELCN (76 aa). N-linked (GlcNAc...) asparagine glycosylation occurs at asparagine 46. Residue glycine 103 is the site of GPI-anchor amidated glycine attachment. A propeptide spans 104–125 (removed in mature form); the sequence is APALNSLHCGALTLLPLLSLRL.

Its subcellular location is the cell membrane. The polypeptide is Ly6/PLAUR domain-containing protein 2 (LYPD2) (Homo sapiens (Human)).